Here is a 544-residue protein sequence, read N- to C-terminus: Methionine--tRNA ligase (544 aa).

Positions 10-20 (PYANGSLHLGH) match the 'HIGH' region motif. Residues cysteine 141, cysteine 144, cysteine 153, and cysteine 156 each contribute to the Zn(2+) site. A 'KMSKS' region motif is present at residues 329 to 333 (KLSTS). Residue threonine 332 coordinates ATP.

It belongs to the class-I aminoacyl-tRNA synthetase family. MetG type 1 subfamily. In terms of assembly, monomer. Zn(2+) is required as a cofactor.

The protein resides in the cytoplasm. The catalysed reaction is tRNA(Met) + L-methionine + ATP = L-methionyl-tRNA(Met) + AMP + diphosphate. Functionally, is required not only for elongation of protein synthesis but also for the initiation of all mRNA translation through initiator tRNA(fMet) aminoacylation. The polypeptide is Methionine--tRNA ligase (Bacillus cereus (strain AH187)).